A 267-amino-acid chain; its full sequence is Shikimate dehydrogenase (NADP(+)) (267 aa).

Residues 14 to 16 and Thr61 contribute to the shikimate site; that span reads SLS. Residue Lys65 is the Proton acceptor of the active site. Shikimate-binding residues include Asn86 and Asp101. Residues 126–130, 150–155, and Leu213 contribute to the NADP(+) site; these read GAGGA and NRTHSK. Tyr215 serves as a coordination point for shikimate. Gly236 lines the NADP(+) pocket.

This sequence belongs to the shikimate dehydrogenase family. As to quaternary structure, homodimer.

The catalysed reaction is shikimate + NADP(+) = 3-dehydroshikimate + NADPH + H(+). Its pathway is metabolic intermediate biosynthesis; chorismate biosynthesis; chorismate from D-erythrose 4-phosphate and phosphoenolpyruvate: step 4/7. In terms of biological role, involved in the biosynthesis of the chorismate, which leads to the biosynthesis of aromatic amino acids. Catalyzes the reversible NADPH linked reduction of 3-dehydroshikimate (DHSA) to yield shikimate (SA). In Vesicomyosocius okutanii subsp. Calyptogena okutanii (strain HA), this protein is Shikimate dehydrogenase (NADP(+)).